A 176-amino-acid chain; its full sequence is Lipoprotein signal peptidase (176 aa).

4 consecutive transmembrane segments (helical) span residues 10 to 30, 48 to 68, 78 to 98, and 102 to 122; these read LFQF…AIVL, VPVL…AFSF, YFFT…LLRM, and MVVL…NLID. Active-site residues include D131 and D149. Residues 141–161 form a helical membrane-spanning segment; it reads HFPAFNIADSAITLGTILLLI.

It belongs to the peptidase A8 family.

The protein resides in the cell inner membrane. It catalyses the reaction Release of signal peptides from bacterial membrane prolipoproteins. Hydrolyzes -Xaa-Yaa-Zaa-|-(S,diacylglyceryl)Cys-, in which Xaa is hydrophobic (preferably Leu), and Yaa (Ala or Ser) and Zaa (Gly or Ala) have small, neutral side chains.. It functions in the pathway protein modification; lipoprotein biosynthesis (signal peptide cleavage). Functionally, this protein specifically catalyzes the removal of signal peptides from prolipoproteins. The protein is Lipoprotein signal peptidase of Acinetobacter baumannii (strain SDF).